Consider the following 125-residue polypeptide: Large ribosomal subunit protein bL12 (125 aa).

It belongs to the bacterial ribosomal protein bL12 family. Homodimer. Part of the ribosomal stalk of the 50S ribosomal subunit. Forms a multimeric L10(L12)X complex, where L10 forms an elongated spine to which 2 to 4 L12 dimers bind in a sequential fashion. Binds GTP-bound translation factors.

In terms of biological role, forms part of the ribosomal stalk which helps the ribosome interact with GTP-bound translation factors. Is thus essential for accurate translation. The sequence is that of Large ribosomal subunit protein bL12 from Francisella tularensis subsp. holarctica (strain FTNF002-00 / FTA).